Here is a 313-residue protein sequence, read N- to C-terminus: Alpha-S1-casein (313 aa).

Residues 1–15 (MKLLILTCLVAAAFA) form the signal peptide. Residues 77 to 96 (ASEEQAMASAQEDSSISSSS) are compositionally biased toward low complexity. The tract at residues 77–111 (ASEEQAMASAQEDSSISSSSEESEEAIPNITEQKN) is disordered. Residues Ser90, Ser91, Ser93, Ser94, Ser95, and Ser96 each carry the phosphoserine modification. 15 tandem repeats follow at residues 135-140 (LLQKAS), 141-146 (LAKQAS), 147-152 (LFQQPS), 153-158 (LVQQAS), 159-164 (LFQQPS), 165-170 (LLQQAS), 171-176 (LFQQPS), 177-182 (MAQQAS), 183-188 (LLQQLL), 189-194 (LAQQPS), 195-200 (LALQVS), 201-206 (PAQQSS), 207-212 (LVQQAF), 213-218 (LAQQAS), and 219-224 (LAQKHH). Residues 135–224 (LLQKASLAKQ…QQASLAQKHH (90 aa)) are 15 X 6 AA tandem repeats.

Belongs to the alpha-casein family. As to expression, mammary gland specific. Secreted in milk.

The protein localises to the secreted. In terms of biological role, important role in the capacity of milk to transport calcium phosphate. In Mus musculus (Mouse), this protein is Alpha-S1-casein (Csn1s1).